Here is a 507-residue protein sequence, read N- to C-terminus: MTKSEQQADSRHNVIDLVGNTPLIALKKLPKALGIKPQIYAKLELYNPGGSIKDRIAKSMVEEAEASGRIHPSRSTLIEPTSGNTGIGLALIGAIKGYRTIITLPEKMSNEKVSVLKALGAEIIRTPTAAAWDSPESHIGVAKKLEKEIPGAVILDQYNNMMNPEAHYFGTGREIQRQLEDLNLFDNLRAVVAGAGTGGTISGISKYLKEQNDKIQIVGADPFGSILAQPENLNKTDITDYKVEGIGYDFVPQVLDRKLIDVWYKTDDKPSFKYARQLISNEGVLVGGSSGSAFTAVVKYCEDHPELTEDDVIVAIFPDSIRSYLTKFVDDEWLKKNNLWDDDVLARFDSSKLEASTTKYADVFGNATVKDLHLKPVVSVKETAKVTDVIKILKDNGFDQLPVLTEDGKLSGLVTLSELLRKLSINNSNNDNTIKGKYLDFKKLNNFNDVSSYNENKSGKKKFIKFDENSKLSDLNRFFEKNSSAVITDGLKPIHIVTKMDLLSYLA.

Lys53 carries the N6-(pyridoxal phosphate)lysine modification. Asn84 provides a ligand contact to pyridoxal 5'-phosphate. Phosphoserine is present on Ser134. Pyridoxal 5'-phosphate contacts are provided by residues 196–200 (GTGGT) and Ser289. Residues Ser350 and Ser424 each carry the phosphoserine modification. Residues 373-432 (HLKPVVSVKETAKVTDVIKILKDNGFDQLPVLTEDGKLSGLVTLSELLRKLSINNSNNDN) enclose the CBS domain.

It belongs to the cysteine synthase/cystathionine beta-synthase family. Pyridoxal 5'-phosphate is required as a cofactor.

It catalyses the reaction L-homocysteine + L-serine = L,L-cystathionine + H2O. It functions in the pathway amino-acid biosynthesis; L-cysteine biosynthesis; L-cysteine from L-homocysteine and L-serine: step 1/2. The sequence is that of Cystathionine beta-synthase (CYS4) from Saccharomyces cerevisiae (strain ATCC 204508 / S288c) (Baker's yeast).